The following is a 363-amino-acid chain: 3,4-dihydroxy-2-butanone 4-phosphate synthase (363 aa).

The DHBP synthase stretch occupies residues 1–202; it reads MSHISPIPEI…IADLIEYRSR (202 aa). Residues 28-29, Asp33, 141-145, and Glu165 each bind D-ribulose 5-phosphate; these read RE and RAGHT. Glu29 lines the Mg(2+) pocket. His144 is a Mg(2+) binding site. The interval 205 to 363 is GTP cyclohydrolase II-like; it reads SLLEDMGNAP…EVVGFEEAEK (159 aa).

The protein in the N-terminal section; belongs to the DHBP synthase family. This sequence in the C-terminal section; belongs to the GTP cyclohydrolase II family. Requires Mg(2+) as cofactor. Mn(2+) serves as cofactor.

The catalysed reaction is D-ribulose 5-phosphate = (2S)-2-hydroxy-3-oxobutyl phosphate + formate + H(+). Its pathway is cofactor biosynthesis; riboflavin biosynthesis; 2-hydroxy-3-oxobutyl phosphate from D-ribulose 5-phosphate: step 1/1. In terms of biological role, catalyzes the conversion of D-ribulose 5-phosphate to formate and 3,4-dihydroxy-2-butanone 4-phosphate. This is 3,4-dihydroxy-2-butanone 4-phosphate synthase (ribB) from Neisseria meningitidis serogroup B (strain ATCC BAA-335 / MC58).